Here is a 394-residue protein sequence, read N- to C-terminus: Putative nickel insertion protein (394 aa).

This sequence belongs to the LarC family.

The protein is Putative nickel insertion protein of Syntrophotalea carbinolica (strain DSM 2380 / NBRC 103641 / GraBd1) (Pelobacter carbinolicus).